Here is a 179-residue protein sequence, read N- to C-terminus: Probable inosine/xanthosine triphosphatase (179 aa).

Residue 13 to 18 participates in substrate binding; the sequence is STNPVK. Q70 provides a ligand contact to Mg(2+).

It belongs to the YjjX NTPase family. Homodimer. Mg(2+) serves as cofactor. It depends on Mn(2+) as a cofactor.

It carries out the reaction XTP + H2O = XDP + phosphate + H(+). It catalyses the reaction ITP + H2O = IDP + phosphate + H(+). Functionally, phosphatase that hydrolyzes non-canonical purine nucleotides such as XTP and ITP to their respective diphosphate derivatives. Probably excludes non-canonical purines from DNA/RNA precursor pool, thus preventing their incorporation into DNA/RNA and avoiding chromosomal lesions. The polypeptide is Probable inosine/xanthosine triphosphatase (Methanocaldococcus jannaschii (strain ATCC 43067 / DSM 2661 / JAL-1 / JCM 10045 / NBRC 100440) (Methanococcus jannaschii)).